We begin with the raw amino-acid sequence, 216 residues long: UDP-N-acetylbacillosamine N-acetyltransferase (216 aa).

Histidine 137 functions as the Proton acceptor in the catalytic mechanism. Histidine 146 lines the acetyl-CoA pocket.

It belongs to the transferase hexapeptide repeat family. In terms of assembly, forms oligomers.

It carries out the reaction UDP-N-acetylbacillosamine + acetyl-CoA = UDP-N,N'-diacetylbacillosamine + CoA + H(+). Its function is as follows. Catalyzes the conversion of UDP-2,4,6-trideoxy-2-acetamido-4-amino glucose to UDP-2,4,6-trideoxy-2,4-diacetamido glucose, commonly known as UDP-N,N'-diacetylbacillosamine (UDP-diNAcBac). In Bacillus subtilis (strain 168), this protein is UDP-N-acetylbacillosamine N-acetyltransferase.